A 191-amino-acid chain; its full sequence is Peptidyl-tRNA hydrolase (191 aa).

Residue Y14 participates in tRNA binding. H19 serves as the catalytic Proton acceptor. 3 residues coordinate tRNA: Y64, N66, and N112.

The protein belongs to the PTH family. In terms of assembly, monomer.

It localises to the cytoplasm. The catalysed reaction is an N-acyl-L-alpha-aminoacyl-tRNA + H2O = an N-acyl-L-amino acid + a tRNA + H(+). In terms of biological role, hydrolyzes ribosome-free peptidyl-tRNAs (with 1 or more amino acids incorporated), which drop off the ribosome during protein synthesis, or as a result of ribosome stalling. Catalyzes the release of premature peptidyl moieties from peptidyl-tRNA molecules trapped in stalled 50S ribosomal subunits, and thus maintains levels of free tRNAs and 50S ribosomes. The polypeptide is Peptidyl-tRNA hydrolase (Lachnoclostridium phytofermentans (strain ATCC 700394 / DSM 18823 / ISDg) (Clostridium phytofermentans)).